Reading from the N-terminus, the 207-residue chain is Large ribosomal subunit protein uL4 (207 aa).

Residues 56–77 (FVSGGGKKPWRQKGTGRARHGS) form a disordered region. A compositionally biased stretch (basic residues) spans 63 to 77 (KPWRQKGTGRARHGS).

It belongs to the universal ribosomal protein uL4 family. In terms of assembly, part of the 50S ribosomal subunit.

One of the primary rRNA binding proteins, this protein initially binds near the 5'-end of the 23S rRNA. It is important during the early stages of 50S assembly. It makes multiple contacts with different domains of the 23S rRNA in the assembled 50S subunit and ribosome. Functionally, forms part of the polypeptide exit tunnel. The sequence is that of Large ribosomal subunit protein uL4 from Phytoplasma australiense.